We begin with the raw amino-acid sequence, 356 residues long: Protein-glutamate methylesterase/protein-glutamine glutaminase 3 (356 aa).

The Response regulatory domain occupies 3–120 (KVAIVDDSAV…KGFLEESQAR (118 aa)). Asp54 carries the post-translational modification 4-aspartylphosphate. The CheB-type methylesterase domain occupies 165-356 (NQTTDRVVAL…AEEIIAFTKQ (192 aa)). Residues Ser177, His203, and Asp299 contribute to the active site.

This sequence belongs to the CheB family. Post-translationally, phosphorylated by CheA. Phosphorylation of the N-terminal regulatory domain activates the methylesterase activity.

Its subcellular location is the cytoplasm. It carries out the reaction [protein]-L-glutamate 5-O-methyl ester + H2O = L-glutamyl-[protein] + methanol + H(+). The catalysed reaction is L-glutaminyl-[protein] + H2O = L-glutamyl-[protein] + NH4(+). In terms of biological role, involved in chemotaxis. Part of a chemotaxis signal transduction system that modulates chemotaxis in response to various stimuli. Catalyzes the demethylation of specific methylglutamate residues introduced into the chemoreceptors (methyl-accepting chemotaxis proteins or MCP) by CheR. Also mediates the irreversible deamidation of specific glutamine residues to glutamic acid. This chain is Protein-glutamate methylesterase/protein-glutamine glutaminase 3, found in Shewanella oneidensis (strain ATCC 700550 / JCM 31522 / CIP 106686 / LMG 19005 / NCIMB 14063 / MR-1).